The primary structure comprises 331 residues: Probable protein phosphatase 2C 1 (331 aa).

The segment at 1–29 (MAASSTATRLSPPRLHAPTTPSPHLPLRR) is disordered. Positions 48-292 (THLIPHPRKA…DDITVIVAQV (245 aa)) constitute a PPM-type phosphatase domain. The Mn(2+) site is built by Asp79, Gly80, Asp210, and Asp283. The segment at 300–331 (DEGVDEEKGQGDEQGSAVAVASSEQKEDSITT) is disordered.

It belongs to the PP2C family. It depends on Mg(2+) as a cofactor. Requires Mn(2+) as cofactor.

It catalyses the reaction O-phospho-L-seryl-[protein] + H2O = L-seryl-[protein] + phosphate. It carries out the reaction O-phospho-L-threonyl-[protein] + H2O = L-threonyl-[protein] + phosphate. The protein is Probable protein phosphatase 2C 1 of Oryza sativa subsp. japonica (Rice).